Reading from the N-terminus, the 460-residue chain is Proline--tRNA ligase (460 aa).

It belongs to the class-II aminoacyl-tRNA synthetase family. ProS type 3 subfamily. As to quaternary structure, homodimer.

It localises to the cytoplasm. The enzyme catalyses tRNA(Pro) + L-proline + ATP = L-prolyl-tRNA(Pro) + AMP + diphosphate. In terms of biological role, catalyzes the attachment of proline to tRNA(Pro) in a two-step reaction: proline is first activated by ATP to form Pro-AMP and then transferred to the acceptor end of tRNA(Pro). This chain is Proline--tRNA ligase, found in Methanococcus maripaludis (strain C7 / ATCC BAA-1331).